Consider the following 140-residue polypeptide: Large ribosomal subunit protein uL14 (140 aa).

It belongs to the universal ribosomal protein uL14 family.

The polypeptide is Large ribosomal subunit protein uL14 (RPL23) (Brugia malayi (Filarial nematode worm)).